The chain runs to 75 residues: Kappa-scoloptoxin(03)-Ssm1e (75 aa).

The N-terminal stretch at methionine 1 to serine 23 is a signal peptide.

Belongs to the scoloptoxin-03 family. Contains 3 disulfide bonds. In terms of tissue distribution, expressed by the venom gland.

It is found in the secreted. Inhibits voltage-gated potassium channels. This Scolopendra mutilans (Chinese red-headed centipede) protein is Kappa-scoloptoxin(03)-Ssm1e.